A 156-amino-acid chain; its full sequence is ATP synthase subunit b (156 aa).

A helical transmembrane segment spans residues 12-32; sequence VAFLIFVLFCMKYVWPPVITA.

It belongs to the ATPase B chain family. F-type ATPases have 2 components, F(1) - the catalytic core - and F(0) - the membrane proton channel. F(1) has five subunits: alpha(3), beta(3), gamma(1), delta(1), epsilon(1). F(0) has three main subunits: a(1), b(2) and c(10-14). The alpha and beta chains form an alternating ring which encloses part of the gamma chain. F(1) is attached to F(0) by a central stalk formed by the gamma and epsilon chains, while a peripheral stalk is formed by the delta and b chains.

It is found in the cell inner membrane. F(1)F(0) ATP synthase produces ATP from ADP in the presence of a proton or sodium gradient. F-type ATPases consist of two structural domains, F(1) containing the extramembraneous catalytic core and F(0) containing the membrane proton channel, linked together by a central stalk and a peripheral stalk. During catalysis, ATP synthesis in the catalytic domain of F(1) is coupled via a rotary mechanism of the central stalk subunits to proton translocation. Its function is as follows. Component of the F(0) channel, it forms part of the peripheral stalk, linking F(1) to F(0). This is ATP synthase subunit b from Pseudomonas putida (strain ATCC 700007 / DSM 6899 / JCM 31910 / BCRC 17059 / LMG 24140 / F1).